The primary structure comprises 419 residues: Serine--tRNA ligase (419 aa).

225 to 227 is a binding site for L-serine; the sequence is TAE. Residue 256–258 participates in ATP binding; sequence RKE. E279 lines the L-serine pocket. 343–346 contacts ATP; it reads EISS. S378 lines the L-serine pocket.

The protein belongs to the class-II aminoacyl-tRNA synthetase family. Type-1 seryl-tRNA synthetase subfamily. In terms of assembly, homodimer. The tRNA molecule binds across the dimer.

Its subcellular location is the cytoplasm. It carries out the reaction tRNA(Ser) + L-serine + ATP = L-seryl-tRNA(Ser) + AMP + diphosphate + H(+). The enzyme catalyses tRNA(Sec) + L-serine + ATP = L-seryl-tRNA(Sec) + AMP + diphosphate + H(+). The protein operates within aminoacyl-tRNA biosynthesis; selenocysteinyl-tRNA(Sec) biosynthesis; L-seryl-tRNA(Sec) from L-serine and tRNA(Sec): step 1/1. In terms of biological role, catalyzes the attachment of serine to tRNA(Ser). Is also able to aminoacylate tRNA(Sec) with serine, to form the misacylated tRNA L-seryl-tRNA(Sec), which will be further converted into selenocysteinyl-tRNA(Sec). The chain is Serine--tRNA ligase from Pelagibacter ubique (strain HTCC1062).